A 52-amino-acid chain; its full sequence is Conotoxin Ac4.3a (52 aa).

Positions serine 1 to arginine 11 are excised as a propeptide. Glutamine 12 bears the Pyrrolidone carboxylic acid mark. Glutamate 14 carries the 4-carboxyglutamate modification. Residues threonine 18 and threonine 20 are each glycosylated (O-linked (HexNAc...) threonine). A 4-hydroxyproline mark is found at proline 28, proline 33, and proline 47. Proline 47 bears the Proline amide mark. Residues glycine 48–aspartate 52 constitute a propeptide that is removed on maturation.

Belongs to the conotoxin A superfamily. Contains 3 disulfide bonds. Expressed by the venom duct.

Its subcellular location is the secreted. Probable neurotoxin with ion channel inhibitor activity. The polypeptide is Conotoxin Ac4.3a (Conus achatinus (Little frog cone)).